The following is a 351-amino-acid chain: DNA polymerase IV (351 aa).

Residues 4–185 (IIHVDMDCFF…LPLAKIPGVG (182 aa)) form the UmuC domain. The Mg(2+) site is built by aspartate 8 and aspartate 103. Glutamate 104 is an active-site residue.

This sequence belongs to the DNA polymerase type-Y family. In terms of assembly, monomer. Requires Mg(2+) as cofactor.

The protein resides in the cytoplasm. The enzyme catalyses DNA(n) + a 2'-deoxyribonucleoside 5'-triphosphate = DNA(n+1) + diphosphate. Poorly processive, error-prone DNA polymerase involved in untargeted mutagenesis. Copies undamaged DNA at stalled replication forks, which arise in vivo from mismatched or misaligned primer ends. These misaligned primers can be extended by PolIV. Exhibits no 3'-5' exonuclease (proofreading) activity. May be involved in translesional synthesis, in conjunction with the beta clamp from PolIII. In Escherichia coli O1:K1 / APEC, this protein is DNA polymerase IV.